The sequence spans 379 residues: MVIGCCTLNNISEDAKTRSDANKQIEKLIEKEKKNFKSTHRLLLLGAGESGKSTIVKQMRILHIDGFSEREKKEKIDAIRKNLRDAICSIAGAMGSLKPPVKLELSENRKLRDYILETASKPDFDYPPEFFTYCAKLWKDGGIQETFERSNEYQLIDCAKYFLDKALEVGAPNYIPSEQDILRCRVLTSGIFETKFSVDKVNFHMFDVGGQREERRKWIQCFNDVTAIIFVAACSSYNMVLREDPSQNRVKESLELLASIWNNRWLRNISVILFLNKQDLLTEKVLAGKSKIEVYFPHYATYQAPADTLAEYRHENSEVVRARFFFRDEFLKVTSNNNGGRHYCYPHLTCAVDTENIRRVFNDCRDIIQRMHLRQYELL.

Residues 38 to 379 form the G-alpha domain; sequence STHRLLLLGA…RMHLRQYELL (342 aa). Residues 41–54 are G1 motif; sequence RLLLLGAGESGKST. GTP is bound by residues 46–53, 182–188, 207–211, 276–279, and alanine 351; these read GAGESGKS, LRCRVLT, DVGGQ, and NKQD. Serine 53 and threonine 188 together coordinate Mg(2+). Residues 180-188 form a G2 motif region; that stretch reads DILRCRVLT. The interval 203-212 is G3 motif; that stretch reads FHMFDVGGQR. The G4 motif stretch occupies residues 272–279; it reads ILFLNKQD. A G5 motif region spans residues 349–354; sequence TCAVDT.

Belongs to the G-alpha family. G(s) subfamily. G proteins are composed of 3 units; alpha, beta and gamma. The alpha chain contains the guanine nucleotide binding site.

Its function is as follows. Guanine nucleotide-binding proteins (G proteins) are involved as modulators or transducers in various transmembrane signaling systems. The G(s) protein is involved in hormonal regulation of adenylate cyclase: it activates the cyclase in response to beta-adrenergic stimuli. The sequence is that of Guanine nucleotide-binding protein G(s) subunit alpha from Schistosoma mansoni (Blood fluke).